Here is a 146-residue protein sequence, read N- to C-terminus: Small ribosomal subunit protein uS5 (146 aa).

The S5 DRBM domain maps to Phe8–Val71.

This sequence belongs to the universal ribosomal protein uS5 family. In terms of assembly, part of the 30S ribosomal subunit. Contacts proteins S4 and S8.

Functionally, with S4 and S12 plays an important role in translational accuracy. Its function is as follows. Located at the back of the 30S subunit body where it stabilizes the conformation of the head with respect to the body. This is Small ribosomal subunit protein uS5 from Aliarcobacter butzleri (strain RM4018) (Arcobacter butzleri).